Here is a 404-residue protein sequence, read N- to C-terminus: MKLPIYLDYAATTPVDPRVAEKMMQCLTMDGIFGNPASRSHRYGWQAEEAVDIARNQVADLINADPREIVFTSGATESDNLAIKGVAHFYHKKGKHIITSKTEHKAVLDTCRQLEREGYEVTYLQPEPSGLIPVAMIEAAMREDTILVSIMQVNNEIGVIQDIDAIGELCRSRKIIFHVDAAQSAGKLPIDVQTTKVDLMSISGHKMYGPKGIGALYVSRKPRIRLEAAMHGGGHERGMRSGTLATHQIVGMGEAAAIAKADMVVDNERIARLRDKLWNGIKHIEETYINGDVEKRACGSLNVSFNFVEGESLMMALKDLAVSSGSACTSASLEPSYVLRALGLNDEMAHSSIRFSIGRFTTDEEIDHAIETIKESIGNLREMSPLWEMFKDGIDLDSVQWAHH.

Pyridoxal 5'-phosphate is bound by residues 75–76, Asn-155, Gln-183, and 203–205; these read AT and SGH. At Lys-206 the chain carries N6-(pyridoxal phosphate)lysine. A pyridoxal 5'-phosphate-binding site is contributed by Thr-243. Cys-328 serves as the catalytic Cysteine persulfide intermediate. Cys-328 contacts [2Fe-2S] cluster.

It belongs to the class-V pyridoxal-phosphate-dependent aminotransferase family. NifS/IscS subfamily. Homodimer. Forms a heterotetramer with IscU, interacts with other sulfur acceptors. Requires pyridoxal 5'-phosphate as cofactor.

The protein resides in the cytoplasm. The catalysed reaction is (sulfur carrier)-H + L-cysteine = (sulfur carrier)-SH + L-alanine. It participates in cofactor biosynthesis; iron-sulfur cluster biosynthesis. Its function is as follows. Master enzyme that delivers sulfur to a number of partners involved in Fe-S cluster assembly, tRNA modification or cofactor biosynthesis. Catalyzes the removal of elemental sulfur atoms from cysteine to produce alanine. Functions as a sulfur delivery protein for Fe-S cluster synthesis onto IscU, an Fe-S scaffold assembly protein, as well as other S acceptor proteins. The polypeptide is Cysteine desulfurase IscS (Shewanella halifaxensis (strain HAW-EB4)).